We begin with the raw amino-acid sequence, 86 residues long: MVKIRLTRGGAKKRPFYHIIVTDVRSARDGRNIERLGYYNPVAQGAEPRVVLDVARVDHWVGQGAQLTDKVRNLYREASKSQAAAA.

It belongs to the bacterial ribosomal protein bS16 family.

The protein is Small ribosomal subunit protein bS16 of Xanthomonas campestris pv. campestris (strain 8004).